Here is a 504-residue protein sequence, read N- to C-terminus: Protein DETOXIFICATION 38 (504 aa).

12 helical membrane-spanning segments follow: residues 56-76 (LLLRLALPAILVYLINGGMGI), 90-110 (LAAASIGNSSFSLVYALMLGM), 139-159 (IVLALVGFPMTILYTFSYPIL), 170-190 (YMGSLYIAGLIPQIFAYAVYF), 208-228 (ISAAALVLQISLTWITVYAMG), 234-254 (IAYVLTISWWFIVGAQTFYVI), 273-295 (GLWSFFKLSAGSAVMICLELWYT), 316-336 (SICMSISALSFMVSVGFNAAV), 356-376 (TWTATFVSFVISVVEALVVIA), 401-421 (FLAVTIILNGIQPVLSGVAVG), 433-453 (IGCYYIVGIPIGCILGFTFNF), and 457-477 (GIWTGMIGGTLMQTLILLYVT).

This sequence belongs to the multi antimicrobial extrusion (MATE) (TC 2.A.66.1) family.

It localises to the membrane. This Arabidopsis thaliana (Mouse-ear cress) protein is Protein DETOXIFICATION 38.